The following is an 80-amino-acid chain: Gamma-conotoxin-like Am6.6 (80 aa).

An N-terminal signal peptide occupies residues 1–19 (MEKLTILLLVAAILMSTQA). A propeptide spanning residues 20-45 (LNQEQRQQAKINLLSKKKPSAERWRR) is cleaved from the precursor. 3 disulfide bridges follow: Cys47-Cys61, Cys54-Cys65, and Cys60-Cys70. 2 positions are modified to 4-carboxyglutamate: Glu56 and Glu59. Glu71 is subject to 4-carboxyglutamate. Residue Pro76 is modified to 4-hydroxyproline. Residues 78–80 (RAI) constitute a propeptide that is removed on maturation.

It belongs to the conotoxin O2 family. Expressed by the venom duct.

It is found in the secreted. Its function is as follows. Gamma-conotoxins may act on voltage-gated non-specific cation pacemaker channels (HCN). This Conus amadis (Amadis cone) protein is Gamma-conotoxin-like Am6.6.